We begin with the raw amino-acid sequence, 217 residues long: Elongation factor Ts (217 aa).

Residues Thr-82–Val-85 form an involved in Mg(2+) ion dislocation from EF-Tu region.

This sequence belongs to the EF-Ts family.

Its subcellular location is the cytoplasm. Its function is as follows. Associates with the EF-Tu.GDP complex and induces the exchange of GDP to GTP. It remains bound to the aminoacyl-tRNA.EF-Tu.GTP complex up to the GTP hydrolysis stage on the ribosome. The protein is Elongation factor Ts of Synechococcus sp. (strain RCC307).